Consider the following 285-residue polypeptide: Dioxygenase andF (285 aa).

Fe cation-binding residues include H128, D130, and H205.

It belongs to the PhyH family. In terms of assembly, homodimer. Fe cation is required as a cofactor.

It functions in the pathway secondary metabolite biosynthesis; terpenoid biosynthesis. Functionally, dioxygenase; part of the gene cluster that mediates the biosynthesis of anditomin, a fungal meroterpenoid. The first step of the pathway is the synthesis of 3,5-dimethylorsellinic acid (DMOA) by the polyketide synthase andM. DMOA is then converted to the phthalide compound 5,7-dihydroxy-4,6-dimethylphthalide (DHDMP) by the cytochrome P450 monooxygenase andK, which is further prenylated by the prenyltransferase andD to yield farnesyl-DHDMP. Further epoxidation by the FAD-dependent monooxygenase andE leads to epoxyfarnesyl-DHDMP. The next step involves the terpene cyclase andB that converts epoxyfarnesyl-DHDMP into preandiloid A through opening of the epoxide ring followed by the cyclization of the farnesyl moiety. Preandiloid A is in turn oxidized at the C-3 hydroxyl group to yield preandiloid B by the dehydrogenase andC. The dioxygenase andA is solely responsible for the dehydrogenation of preandiloid B leading to the enone preandiloid C, as well as for the intriguing structural rearrangement to generate the bicyclo[2.2.2]octane core, transforming preandiloid C into andiconin. FAD-binding monooxygenase andJ then produces andilesin D which is reduced by dehydrogenase andI to yield andilesin A. Action of acetyltransferase andG followed by a spontaneous acetate elimination leads then to andilesin B, which is in turn substrate of the short chain dehydrogenase andH to yield andilesin C. Finally, the dioxygenase andF catalyzes the transformation of andilesin C to anditomin. This chain is Dioxygenase andF, found in Emericella variicolor (Aspergillus stellatus).